The sequence spans 407 residues: Imidazolonepropionase (407 aa).

2 residues coordinate Fe(3+): H68 and H70. Residues H68 and H70 each contribute to the Zn(2+) site. 4-imidazolone-5-propanoate is bound by residues R77, Y140, and H173. Residue Y140 coordinates N-formimidoyl-L-glutamate. H238 is a Fe(3+) binding site. H238 serves as a coordination point for Zn(2+). 4-imidazolone-5-propanoate is bound at residue Q241. A Fe(3+)-binding site is contributed by D313. D313 is a Zn(2+) binding site. N-formimidoyl-L-glutamate is bound by residues N315 and G317. T318 contributes to the 4-imidazolone-5-propanoate binding site.

This sequence belongs to the metallo-dependent hydrolases superfamily. HutI family. Zn(2+) is required as a cofactor. Fe(3+) serves as cofactor.

The protein localises to the cytoplasm. The catalysed reaction is 4-imidazolone-5-propanoate + H2O = N-formimidoyl-L-glutamate. It participates in amino-acid degradation; L-histidine degradation into L-glutamate; N-formimidoyl-L-glutamate from L-histidine: step 3/3. Functionally, catalyzes the hydrolytic cleavage of the carbon-nitrogen bond in imidazolone-5-propanoate to yield N-formimidoyl-L-glutamate. It is the third step in the universal histidine degradation pathway. The polypeptide is Imidazolonepropionase (Burkholderia cenocepacia (strain HI2424)).